We begin with the raw amino-acid sequence, 103 residues long: Acylphosphatase-2 (103 aa).

The region spanning 13–103 (SVDYEVFGRV…LQYNGFSTRY (91 aa)) is the Acylphosphatase-like domain. Catalysis depends on residues R28 and N46.

Belongs to the acylphosphatase family.

It carries out the reaction an acyl phosphate + H2O = a carboxylate + phosphate + H(+). The protein is Acylphosphatase-2 (acyp2) of Xenopus tropicalis (Western clawed frog).